Reading from the N-terminus, the 114-residue chain is Ribonuclease P protein component (114 aa).

This sequence belongs to the RnpA family. In terms of assembly, consists of a catalytic RNA component (M1 or rnpB) and a protein subunit.

The enzyme catalyses Endonucleolytic cleavage of RNA, removing 5'-extranucleotides from tRNA precursor.. Functionally, RNaseP catalyzes the removal of the 5'-leader sequence from pre-tRNA to produce the mature 5'-terminus. It can also cleave other RNA substrates such as 4.5S RNA. The protein component plays an auxiliary but essential role in vivo by binding to the 5'-leader sequence and broadening the substrate specificity of the ribozyme. The sequence is that of Ribonuclease P protein component from Buchnera aphidicola subsp. Baizongia pistaciae (strain Bp).